The sequence spans 70 residues: Large ribosomal subunit protein bL31 (70 aa).

Cys16, Cys18, Cys37, and Cys40 together coordinate Zn(2+).

This sequence belongs to the bacterial ribosomal protein bL31 family. Type A subfamily. Part of the 50S ribosomal subunit. Zn(2+) is required as a cofactor.

Its function is as follows. Binds the 23S rRNA. This is Large ribosomal subunit protein bL31 from Salmonella agona (strain SL483).